Reading from the N-terminus, the 697-residue chain is MIAAVEKDAVPRKRRVISQVSQACIRCRQKKIKCSGEKPSCQACSNNKVECIWPDRPNMRGKKPSSAARTLSPLTGIVQPYLGSHPFSPTILSPSSPNMDFTYSINSFGDYQKQLRLPTSRKLLQLWDIFLKTSYTELFGIFNKAQITSQIASDTAPPVLVLCICAHAARFSQEEVNRFKSSTAASDYYANQAFSLLPCRFQDISLTNITCLLLLCLIELGSCRGAKAWLLLGMALRMVDSLDLGNEINDNPLTMGSNTVSWTEAEQKRRVYWACFFVERLLSTGYMAPSKLRSLSLSLQKTSIQLPCPEPNFLFNQPILTELFDGSLPENTQSDTTSMAPYQRSLQLEFMTGSLIRLSNLWSEISRWALCGGYTKDITPPWLNQSQFHRSFELLKAWHENLPPRAVWSYTNYSAYSSPGESAGACYTFMHLLYHTTLTYLLRNVLDLFPEKSRQKSKLFSSVSQRFGQQPPTVWMDMILDQVITSADFITKLSKDPLNYIMSPFVGFSILTAATIHMLLKFCVVNIDQNYISSSRLVHVDHQILQDRSKYWKINQAMLVTLQRLYNFYRFQYLEEQSLYNFKIPGFPLCILEYGIVEDQSMKSNPDLNSFSKELFSRGTNELLNNGDDTQSGNSTPAMGVSEIRTDTILDEEVPVDPLITSILDDGRWWEEMFGSERKAGFKETVFEDMNGRSIRL.

The zn(2)-C6 fungal-type DNA-binding region spans 24–51; sequence CIRCRQKKIKCSGEKPSCQACSNNKVEC. A helical membrane pass occupies residues 500–520; that stretch reads YIMSPFVGFSILTAATIHMLL.

Its subcellular location is the nucleus membrane. This is an uncharacterized protein from Schizosaccharomyces pombe (strain 972 / ATCC 24843) (Fission yeast).